Consider the following 309-residue polypeptide: MSIRIIPQDELGSSEKRTADMIPPLLFPRLKNVYNRRAERLRELAENNPLGDYLRFAALIAHAQEVVLYDHPLRMDLTARIKDANDQGKPPLDIHVLPRDKHWHTLLHSMIAELKPEMSGPALAVIENLEKASEQELEQMASALFASDFASVSSDKAPFIWAALSLYWAQMASLIPGKARAEYGEARQYCPVCGSMPVSSMVQIGTTQGLRYLHCNLCETEWHVVRVKCSNCEQSRDLHYWSLENEQAAVKAESCGDCGTYLKILYQEKDPKVEAVADDLASLVLDARMEQEGFARSSINPFLFPGEGE.

This sequence belongs to the FdhE family.

The protein resides in the cytoplasm. Its function is as follows. Necessary for formate dehydrogenase activity. The chain is Protein FdhE from Salmonella enteritidis PT4 (strain P125109).